The chain runs to 117 residues: Large ribosomal subunit protein bL19 (117 aa).

It belongs to the bacterial ribosomal protein bL19 family.

This protein is located at the 30S-50S ribosomal subunit interface and may play a role in the structure and function of the aminoacyl-tRNA binding site. The sequence is that of Large ribosomal subunit protein bL19 from Exiguobacterium sp. (strain ATCC BAA-1283 / AT1b).